The sequence spans 475 residues: Glutamyl-tRNA(Gln) amidotransferase subunit A (475 aa).

Catalysis depends on charge relay system residues lysine 76 and serine 151. The active-site Acyl-ester intermediate is serine 175.

This sequence belongs to the amidase family. GatA subfamily. As to quaternary structure, heterotrimer of A, B and C subunits.

The catalysed reaction is L-glutamyl-tRNA(Gln) + L-glutamine + ATP + H2O = L-glutaminyl-tRNA(Gln) + L-glutamate + ADP + phosphate + H(+). In terms of biological role, allows the formation of correctly charged Gln-tRNA(Gln) through the transamidation of misacylated Glu-tRNA(Gln) in organisms which lack glutaminyl-tRNA synthetase. The reaction takes place in the presence of glutamine and ATP through an activated gamma-phospho-Glu-tRNA(Gln). The sequence is that of Glutamyl-tRNA(Gln) amidotransferase subunit A from Pelodictyon phaeoclathratiforme (strain DSM 5477 / BU-1).